Here is a 719-residue protein sequence, read N- to C-terminus: Polyribonucleotide nucleotidyltransferase (719 aa).

Positions 507 and 513 each coordinate Mg(2+). The region spanning 573-633 (PKLELFSVDP…EQIKAAKDYI (61 aa)) is the KH domain. The S1 motif domain maps to 658 to 719 (GQEFQGIVKK…NGKISVDLCE (62 aa)).

It belongs to the polyribonucleotide nucleotidyltransferase family. It depends on Mg(2+) as a cofactor.

The protein localises to the cytoplasm. It catalyses the reaction RNA(n+1) + phosphate = RNA(n) + a ribonucleoside 5'-diphosphate. Its function is as follows. Involved in mRNA degradation. Catalyzes the phosphorolysis of single-stranded polyribonucleotides processively in the 3'- to 5'-direction. The sequence is that of Polyribonucleotide nucleotidyltransferase from Campylobacter jejuni (strain RM1221).